The following is a 2365-amino-acid chain: Voltage-dependent T-type calcium channel subunit alpha-1H (2365 aa).

The interval Met-1–Gly-63 is disordered. Residues Met-1 to Arg-100 lie on the Cytoplasmic side of the membrane. Positions Gly-16–Pro-36 are enriched in low complexity. Residues Thr-87–Phe-422 form an I repeat. A helical membrane pass occupies residues Trp-101–Met-119. Over Phe-120–Asp-141 the chain is Extracellular. Asp-140 lines the Zn(2+) pocket. Residues Phe-142–Leu-160 form a helical membrane-spanning segment. Topologically, residues Phe-161–Asp-169 are cytoplasmic. The helical transmembrane segment at Thr-170 to Met-184 threads the bilayer. The Extracellular portion of the chain corresponds to Glu-185–Val-193. Zn(2+)-binding residues include Asp-189 and His-191. Asn-192 carries N-linked (GlcNAc...) asparagine glycosylation. The helical transmembrane segment at Ser-194 to Arg-212 threads the bilayer. Over Val-213 to Asn-232 the chain is Cytoplasmic. A helical transmembrane segment spans residues Val-233–Ala-253. Topologically, residues Gly-254 to Tyr-394 are extracellular. N-linked (GlcNAc...) asparagine glycosylation occurs at Asn-271. Residues Asn-395–Ala-419 form a helical membrane-spanning segment. The Cytoplasmic segment spans residues Thr-420–Lys-790. Disordered regions lie at residues Val-490 to Val-573, Pro-618 to Pro-656, and Gly-737 to Pro-761. The span at Gly-500 to Phe-532 shows a compositional bias: basic residues. The segment covering Pro-557–Gly-566 has biased composition (pro residues). Over residues Ala-621–Arg-631 the composition is skewed to polar residues. Residues Trp-776–Phe-1015 form an II repeat. A helical transmembrane segment spans residues Tyr-791 to Tyr-811. Residues His-812–Ile-824 are Extracellular-facing. Residues Ser-825 to Pro-846 form a helical membrane-spanning segment. Over Leu-847–Asn-852 the chain is Cytoplasmic. Residues Pro-853–Gly-871 traverse the membrane as a helical segment. Topologically, residues Gln-872 to Val-879 are extracellular. A helical transmembrane segment spans residues Leu-880 to Val-903. The Cytoplasmic segment spans residues Val-904–Thr-914. Residues Phe-915 to Gly-935 form a helical membrane-spanning segment. The Extracellular segment spans residues Cys-936–Trp-987. A helical transmembrane segment spans residues Ala-988–Val-1012. Residues Glu-1013–Val-1301 are Cytoplasmic-facing. The interval Pro-1059–Pro-1215 is disordered. Residues Gly-1130–Arg-1147 are compositionally biased toward low complexity. Residues Arg-1199–Thr-1209 are compositionally biased toward basic and acidic residues. The III repeat unit spans residues Asn-1292–Phe-1569. The helical transmembrane segment at Ile-1302–Leu-1324 threads the bilayer. At Glu-1325–Ser-1342 the chain is on the extracellular side. A helical membrane pass occupies residues Asn-1343 to Leu-1363. Residues Leu-1364–Ser-1373 are Cytoplasmic-facing. Residues Ser-1374–Ala-1393 form a helical membrane-spanning segment. At Val-1394 to Arg-1407 the chain is on the extracellular side. A helical membrane pass occupies residues Val-1408 to Leu-1429. Residues Val-1430–Arg-1439 lie on the Cytoplasmic side of the membrane. Residues Pro-1440–Phe-1463 form a helical membrane-spanning segment. Topologically, residues Lys-1464–Pro-1540 are extracellular. A glycan (N-linked (GlcNAc...) asparagine) is linked at Asn-1477. A helical membrane pass occupies residues Trp-1541–Val-1566. The Cytoplasmic portion of the chain corresponds to Glu-1567–Ser-1627. The IV repeat unit spans residues Asp-1613–Leu-1874. Residues His-1628–Glu-1648 form a helical membrane-spanning segment. At His-1649–Tyr-1662 the chain is on the extracellular side. The helical transmembrane segment at Cys-1663–Phe-1684 threads the bilayer. At Arg-1685 to Arg-1691 the chain is on the cytoplasmic side. A helical membrane pass occupies residues Trp-1692–Glu-1710. Over Glu-1711–Ile-1724 the chain is Extracellular. The helical transmembrane segment at Ile-1725 to Ala-1748 threads the bilayer. Topologically, residues Leu-1749 to Asn-1762 are cytoplasmic. The helical transmembrane segment at Leu-1763–Gly-1783 threads the bilayer. The Extracellular segment spans residues Arg-1784–Leu-1846. Residues Ser-1847–Leu-1874 form a helical membrane-spanning segment. Over Glu-1875–Val-2365 the chain is Cytoplasmic. 2 stretches are compositionally biased toward polar residues: residues Gln-1897–Asp-1916 and Val-1967–Val-1983. Disordered stretches follow at residues Gln-1897–Leu-1920, Val-1967–Ala-1999, Ala-2053–Trp-2264, and Glu-2321–Val-2365. Acidic residues predominate over residues Asp-2092–Glu-2102. Residues Gly-2172–Glu-2187 are compositionally biased toward basic and acidic residues.

Belongs to the calcium channel alpha-1 subunit (TC 1.A.1.11) family. CACNA1H subfamily. In terms of assembly, interacts (via N-terminal cytoplasmic domain) with STAC. In response to raising of intracellular calcium, the T-type channels are activated by CaM-kinase II. Is highly expressed in lumbosacral and thoracolumbar dorsal root ganglion neurons.

Its subcellular location is the cell membrane. It carries out the reaction Ca(2+)(in) = Ca(2+)(out). Functionally, voltage-sensitive calcium channel that gives rise to T-type calcium currents. T-type calcium channels belong to the 'low-voltage activated (LVA)' group. A particularity of this type of channel is an opening at quite negative potentials, and a voltage-dependent inactivation. T-type channels serve pacemaking functions in both central neurons and cardiac nodal cells and support calcium signaling in secretory cells and vascular smooth muscle. They may also be involved in the modulation of firing patterns of neurons. In the adrenal zona glomerulosa, participates in the signaling pathway leading to aldosterone production in response to either AGT/angiotensin II, or hyperkalemia. This is Voltage-dependent T-type calcium channel subunit alpha-1H (Cacna1h) from Mus musculus (Mouse).